We begin with the raw amino-acid sequence, 281 residues long: DegV domain-containing protein SCO2569 (281 aa).

In terms of domain architecture, DegV spans 5 to 280 (VAIVTDSTAY…PGLLGVVVSS (276 aa)). T62 and S95 together coordinate hexadecanoate.

In terms of biological role, may bind long-chain fatty acids, such as palmitate, and may play a role in lipid transport or fatty acid metabolism. The polypeptide is DegV domain-containing protein SCO2569 (Streptomyces coelicolor (strain ATCC BAA-471 / A3(2) / M145)).